The chain runs to 82 residues: MLVLTRKLKEVIQIGDDIEITVLAIQGDQVKLGINAPKHVEIHRKEIYLAIQAENNAASLASKTSLEQLNEQLKHWKGGKQA.

Belongs to the CsrA/RsmA family. In terms of assembly, homodimer; the beta-strands of each monomer intercalate to form a hydrophobic core, while the alpha-helices form wings that extend away from the core.

The protein resides in the cytoplasm. Its function is as follows. A translational regulator that binds mRNA to regulate translation initiation and/or mRNA stability. Usually binds in the 5'-UTR at or near the Shine-Dalgarno sequence preventing ribosome-binding, thus repressing translation. Its main target seems to be the major flagellin gene, while its function is anatagonized by FliW. This chain is Translational regulator CsrA, found in Geobacillus sp. (strain WCH70).